We begin with the raw amino-acid sequence, 431 residues long: Serine--tRNA ligase (431 aa).

L-serine is bound at residue 236-238 (TAE). 267-269 (RSE) contributes to the ATP binding site. Glu290 is an L-serine binding site. An ATP-binding site is contributed by 354–357 (EISS). Ser389 contacts L-serine.

It belongs to the class-II aminoacyl-tRNA synthetase family. Type-1 seryl-tRNA synthetase subfamily. As to quaternary structure, homodimer. The tRNA molecule binds across the dimer.

It localises to the cytoplasm. It catalyses the reaction tRNA(Ser) + L-serine + ATP = L-seryl-tRNA(Ser) + AMP + diphosphate + H(+). The enzyme catalyses tRNA(Sec) + L-serine + ATP = L-seryl-tRNA(Sec) + AMP + diphosphate + H(+). Its pathway is aminoacyl-tRNA biosynthesis; selenocysteinyl-tRNA(Sec) biosynthesis; L-seryl-tRNA(Sec) from L-serine and tRNA(Sec): step 1/1. Its function is as follows. Catalyzes the attachment of serine to tRNA(Ser). Is also able to aminoacylate tRNA(Sec) with serine, to form the misacylated tRNA L-seryl-tRNA(Sec), which will be further converted into selenocysteinyl-tRNA(Sec). In Janthinobacterium sp. (strain Marseille) (Minibacterium massiliensis), this protein is Serine--tRNA ligase.